Consider the following 227-residue polypeptide: 2,3-bisphosphoglycerate-dependent phosphoglycerate mutase (227 aa).

Substrate-binding positions include 7 to 14 (RHGQSEWN), 20 to 21 (TG), Arg-59, 86 to 89 (ERHY), Lys-97, 113 to 114 (RR), and 182 to 183 (GN). The active-site Tele-phosphohistidine intermediate is the His-8. The Proton donor/acceptor role is filled by Glu-86.

Belongs to the phosphoglycerate mutase family. BPG-dependent PGAM subfamily. As to quaternary structure, homodimer.

The catalysed reaction is (2R)-2-phosphoglycerate = (2R)-3-phosphoglycerate. Its pathway is carbohydrate degradation; glycolysis; pyruvate from D-glyceraldehyde 3-phosphate: step 3/5. Catalyzes the interconversion of 2-phosphoglycerate and 3-phosphoglycerate. This is 2,3-bisphosphoglycerate-dependent phosphoglycerate mutase from Neisseria meningitidis serogroup C / serotype 2a (strain ATCC 700532 / DSM 15464 / FAM18).